The following is a 301-amino-acid chain: Probable actin-related protein 2/3 complex subunit 2 (301 aa).

The protein belongs to the ARPC2 family. As to quaternary structure, component of the Arp2/3 complex, at least composed of arx-1, arx-2, arx-4 and arx-6.

Its subcellular location is the cytoplasm. The protein localises to the cytoskeleton. Its function is as follows. Functions as actin-binding component of the Arp2/3 complex which is involved in regulation of actin polymerization and together with an activating nucleation-promoting factor (NPF) mediates the formation of branched actin networks. Seems to contact the mother actin filament. Plays a role in time-dependent memory loss and the retention of conditioned behavior over time. The protein is Probable actin-related protein 2/3 complex subunit 2 of Caenorhabditis elegans.